Consider the following 211-residue polypeptide: Regulator of G-protein signaling 2 (211 aa).

2 disordered regions span residues 14-33 (RPMD…REKM) and 49-68 (LQNS…KQQA). A necessary for membrane association region spans residues 32–66 (KMKRTLLKDWKTRLSYFLQNSSTPGKPKTGKKSKQ). The tract at residues 79–116 (LWSEAFDELLASKYGLAAFRAFLKSEFCEENIEFWLAC) is necessary to inhibit protein synthesis. An RGS domain is found at 83 to 199 (AFDELLASKY…LESEFYQDLC (117 aa)).

In terms of assembly, interacts with GNAQ. Does not interact with GNAI1 and GNAI3. Interacts with EIF2B5. Interacts with PRKG1 (isoform alpha). Phosphorylated by protein kinase C. Phosphorylation by PRKG1 leads to activation of RGS2 activity. As to expression, expressed in acute myelogenous leukemia (AML) and in acute lymphoblastic leukemia (ALL).

The protein resides in the cell membrane. Its subcellular location is the cytoplasm. It is found in the nucleus. The protein localises to the nucleolus. It localises to the mitochondrion. Functionally, regulates G protein-coupled receptor signaling cascades. Inhibits signal transduction by increasing the GTPase activity of G protein alpha subunits, thereby driving them into their inactive GDP-bound form. It is involved in the negative regulation of the angiotensin-activated signaling pathway. Plays a role in the regulation of blood pressure in response to signaling via G protein-coupled receptors and GNAQ. Plays a role in regulating the constriction and relaxation of vascular smooth muscle. Binds EIF2B5 and blocks its activity, thereby inhibiting the translation of mRNA into protein. The protein is Regulator of G-protein signaling 2 (RGS2) of Homo sapiens (Human).